The primary structure comprises 952 residues: Glycine dehydrogenase (decarboxylating) (952 aa).

The residue at position 703 (Lys-703) is an N6-(pyridoxal phosphate)lysine.

It belongs to the GcvP family. As to quaternary structure, the glycine cleavage system is composed of four proteins: P, T, L and H. It depends on pyridoxal 5'-phosphate as a cofactor.

It catalyses the reaction N(6)-[(R)-lipoyl]-L-lysyl-[glycine-cleavage complex H protein] + glycine + H(+) = N(6)-[(R)-S(8)-aminomethyldihydrolipoyl]-L-lysyl-[glycine-cleavage complex H protein] + CO2. In terms of biological role, the glycine cleavage system catalyzes the degradation of glycine. The P protein binds the alpha-amino group of glycine through its pyridoxal phosphate cofactor; CO(2) is released and the remaining methylamine moiety is then transferred to the lipoamide cofactor of the H protein. The polypeptide is Glycine dehydrogenase (decarboxylating) (Mycolicibacterium gilvum (strain PYR-GCK) (Mycobacterium gilvum (strain PYR-GCK))).